A 259-amino-acid polypeptide reads, in one-letter code: Snake venom serine proteinase 2 (259 aa).

A signal peptide spans Met-1–Ala-18. A propeptide spanning residues Gln-19 to Leu-24 is cleaved from the precursor. The 226-residue stretch at Ile-25–Ala-250 folds into the Peptidase S1 domain. 6 disulfide bridges follow: Cys-31-Cys-162, Cys-49-Cys-65, Cys-97-Cys-257, Cys-141-Cys-211, Cys-173-Cys-190, and Cys-201-Cys-226. Residues His-64 and Asp-109 each act as charge relay system in the active site. Ser-205 acts as the Charge relay system in catalysis.

The protein belongs to the peptidase S1 family. Snake venom subfamily. Monomer. As to expression, expressed by the venom gland.

The protein localises to the secreted. Its function is as follows. Snake venom serine protease that may act in the hemostasis system of the prey. The chain is Snake venom serine proteinase 2 from Crotalus adamanteus (Eastern diamondback rattlesnake).